Consider the following 86-residue polypeptide: Large ribosomal subunit protein eL31 (86 aa).

This sequence belongs to the eukaryotic ribosomal protein eL31 family.

This is Large ribosomal subunit protein eL31 from Methanopyrus kandleri (strain AV19 / DSM 6324 / JCM 9639 / NBRC 100938).